The chain runs to 2314 residues: Protein Ycf2 (2314 aa).

ATP is bound at residue G1653–S1660.

Belongs to the Ycf2 family.

Its subcellular location is the plastid. It localises to the chloroplast stroma. Functionally, probable ATPase of unknown function. Its presence in a non-photosynthetic plant (Epifagus virginiana) and experiments in tobacco indicate that it has an essential function which is probably not related to photosynthesis. This chain is Protein Ycf2, found in Piper cenocladum (Ant piper).